Reading from the N-terminus, the 264-residue chain is Thymidylate synthase 2 (264 aa).

Arginine 21 contacts dUMP. A (6R)-5,10-methylene-5,6,7,8-tetrahydrofolate-binding site is contributed by histidine 51. Residue 126–127 (RR) participates in dUMP binding. Cysteine 146 functions as the Nucleophile in the catalytic mechanism. Residues 166–169 (RSAD), asparagine 177, and 207–209 (HIY) each bind dUMP. Aspartate 169 provides a ligand contact to (6R)-5,10-methylene-5,6,7,8-tetrahydrofolate. Serine 263 lines the (6R)-5,10-methylene-5,6,7,8-tetrahydrofolate pocket.

It belongs to the thymidylate synthase family. Bacterial-type ThyA subfamily. Homodimer.

The protein resides in the cytoplasm. It carries out the reaction dUMP + (6R)-5,10-methylene-5,6,7,8-tetrahydrofolate = 7,8-dihydrofolate + dTMP. It functions in the pathway pyrimidine metabolism; dTTP biosynthesis. Catalyzes the reductive methylation of 2'-deoxyuridine-5'-monophosphate (dUMP) to 2'-deoxythymidine-5'-monophosphate (dTMP) while utilizing 5,10-methylenetetrahydrofolate (mTHF) as the methyl donor and reductant in the reaction, yielding dihydrofolate (DHF) as a by-product. This enzymatic reaction provides an intracellular de novo source of dTMP, an essential precursor for DNA biosynthesis. The protein is Thymidylate synthase 2 of Bacillus amyloliquefaciens (Bacillus velezensis).